We begin with the raw amino-acid sequence, 599 residues long: Elongation factor 4 (599 aa).

One can recognise a tr-type G domain in the interval 5 to 187 (SHIRNFSIIA…RLVQTIPAPT (183 aa)). GTP is bound by residues 17–22 (DHGKST) and 134–137 (NKMD).

Belongs to the TRAFAC class translation factor GTPase superfamily. Classic translation factor GTPase family. LepA subfamily.

It localises to the cell inner membrane. The catalysed reaction is GTP + H2O = GDP + phosphate + H(+). In terms of biological role, required for accurate and efficient protein synthesis under certain stress conditions. May act as a fidelity factor of the translation reaction, by catalyzing a one-codon backward translocation of tRNAs on improperly translocated ribosomes. Back-translocation proceeds from a post-translocation (POST) complex to a pre-translocation (PRE) complex, thus giving elongation factor G a second chance to translocate the tRNAs correctly. Binds to ribosomes in a GTP-dependent manner. In Ectopseudomonas mendocina (strain ymp) (Pseudomonas mendocina), this protein is Elongation factor 4.